The following is a 337-amino-acid chain: MHHHLNTLYQGQSLSRESTRDAFGQVVRGEVDPIVLASLLTALKIKGETPEEIAGAAEALLAEARDFPRPDYEFCDIVGTGGDGLNTINVSTTSALVAAACGLKVAKHGNRSVSSKSGSSDLLDKMGIKLDMSPAQARHCLDKLGICFLFAPQYHAGVRHAMPVRQALKTRTLFNVLGPLINPARPTYQLMGVYAPELVRPIAETLLALGLKTGMVVHGAGLDEIAIHGPTQVAQIRDGEIREFMITPADFGLETYPVSAIQGGEPEENRAITAAILAGQGTPAHNAAIAANVAPLLLMAGKAADLKSAAAEVLAVLASGKAAELAARLATLSHQEA.

Residues Gly-79, 82–83 (GD), Thr-87, 89–92 (NVST), 107–115 (KHGNRSVSS), and Ser-119 contribute to the 5-phospho-alpha-D-ribose 1-diphosphate site. Residue Gly-79 coordinates anthranilate. Residue Ser-91 participates in Mg(2+) binding. Asn-110 lines the anthranilate pocket. Arg-165 lines the anthranilate pocket. Mg(2+) is bound by residues Asp-223 and Glu-224.

This sequence belongs to the anthranilate phosphoribosyltransferase family. As to quaternary structure, homodimer. Requires Mg(2+) as cofactor.

It catalyses the reaction N-(5-phospho-beta-D-ribosyl)anthranilate + diphosphate = 5-phospho-alpha-D-ribose 1-diphosphate + anthranilate. It functions in the pathway amino-acid biosynthesis; L-tryptophan biosynthesis; L-tryptophan from chorismate: step 2/5. Functionally, catalyzes the transfer of the phosphoribosyl group of 5-phosphorylribose-1-pyrophosphate (PRPP) to anthranilate to yield N-(5'-phosphoribosyl)-anthranilate (PRA). The chain is Anthranilate phosphoribosyltransferase from Aeromonas salmonicida (strain A449).